Consider the following 3103-residue polypeptide: MASALLCFLAAILPGMIAAQNTWVLGTSDVRTVEPVNPVGGGVSLGGIDIDSTENRIIVQNTGIAVPFGREKAIDPNSELVINVQAGDSCSIKVLPRQSDPLSQIPGRLVPPSFPCDFSPGEVKYVHFGSRKPQTDKVKLQLRYDTATDVYIIPFTIDVRVESKQLEIVTRNVPLVVQDLMGTSDALDADKLEFEFDSNTEVCKVTVLSSTSGLPRYGEVMNHDEQGQMIDCNDFLELGIQYRHTAATSSPREDYIPLVVELQNQQGQVIKQEYFQSMVRIIDGDDNTPPSLVLSSDMMMEVDQFVMTAITPSILAAEDVETPADMLIFNITSQTLGPDDGMIVSTDDRNQPITSFTQKDLRDLKIAYKPPPRDTDVQTIYQIELEIVDSELATSETHSLLIVVKPKNTLAPVVTTNTGLVLFEGQSRPLLGGQNLGISDEDNLQDVIIAPINGSRYGELRIGNQRIKQFTIADLIEGAVTYHHYGTDTYSDNIIFRMTDGQHEVEFLFPITIAPIDDEAPIVDVNTGVTVNENEVVAITNFVLSATDIDSDDSEIRFVLEQPLSDMGNLFLRQVNIPEDPQNWISQDNFYEREVTEFTLEDIQNGHLFYQHGGSHNADPVFDRILFRVVDSADPQPNESPVQELLVKVMPQDLQPPEMFGGTTLQLSVDEFQITPILKKNLRFTDMDSNDRELKYTIVSPLTDSDSNNNLPVGDIVLTDEPNTPINMFTQAQINHMKVSYKPPSTELGIAPRAITFQFVVQDTQGNMGSPHNFIILLRPVDNQPPTITNTGVQVFERGTVIIDQTMLDATDPDTDRNSIRVVLVQPPVFGTMNLNDIALEKGDEFTLGDIENSRVKYVSGDAEEQSDEIHLEITDGVHVVPIVIHINVAPIDDEAPTLDLPPGTIGSFLEVQENSFSLITSNILSASDPDTEDLLLTFIVDRQPNEGRIESNGVVADVFTQQDIVNGLVRYVHTGGEIGPSKRDDSFNLTLSDMSPDWILGGNEITQVEVYVTVLPVDNLAPNVTMGVQFYVDEAGKGNINMTHLQAPDVDTEDDDILCTIVVAPSVGYLENISPAPGSEKSRGGMPISAFSIKDLRLNHINYVQSIHQGMEPEEDQFTFRCTDGVNESPNFLFPINIIPVNDEEPQVYAREIIVDEGGQRIIDEPLLRAEDGDVPADELHFFIVTPPQHGTITYTRLEGDIPILNFTMDQIANGNDIKYIHDDSETTEDSFTVLLTDGKYEITKEITITILEVDDETPRLTINDGIDIEIGESRIISNRILKATDLDSADSNLTYTVRYAPEKGLLQRLSKFDGSVVENITLGMNFTQWEVDNQRIRYVHTDGDGGRDLIKFDITDGTNPLIDRYFYVTVDHIDNVHPSIINAGVTMQEGSRVTLTTSIISTSDLNSPDEDLLFTITTAPTKGHLESTDNPGMPINSFTQLDLAGSKIYYVHTADDEVKMDSFQFQVTDGFNTVVRTFRISFTDVDNKEPVVRYDTIRLQEGDNKLITPFELGIDDRDTPANELRFTITQLPIHGNILRNNTALVTEFTMHDINENLISYQHDGSEQTADSFSFIVTDGTHNEFYVLPDITTLTRQPQQVPIEIVPVDNGAPQIVVNRGAPTLDLLGTGELGFMITNKYLMSEDRDSVDNSLLYVITTQPQHGYIMNIALGNISITNFTQSDVNNMYIQYIVYPNVDATSDTFFVEVRDAGGNTLPNQPFRLNWSWISLEKEYYEVNETERYLNIKLVRRGYLGETSFVGIQTADGTAIADEDFRGKSARQVQFNPGQTEGFWRVRILNDRLYEQAEVFEIILHDPVMGALEYPDRAVVTIFDAEDESGVFIDLPDNYVIEEDIGEFLVPIRRTGDLSQELMASCSTMPGSATGSDPSPVLSFSDYISRMEEDPDNMVAFDKGEDLAYCRILIIDDSLYEEDETFQVKLSNPMGGRIGNPSAINVIIAGDTDDVPSFYFGEPEYKVDENAPFVEVTVFRTGTDVSKMASVTVRSRASNPVSAVAGEDYAGISRNLDFAPGVNQQTVKVYIIDDRGQPRLEGPETFELVLNMPMNGVLGAPSKTVITINDTISDLPKVEFRHPTYEVNENDIRITAEVVRSGDLSIESSVRCYTRQGSAQVMMDYDERPNTEASIITFLPGERSKTCTVLLMDDNVFEPDEAFRLVLGSPRTASGVPAVVGEQNVTVVTVHDVGDAPIIKFPETKFSIDEPTDLDSVVTVSIPVIRMGDNTQTSIVRVFTKDGSARSGIDYNPLSQVLEFGFNVTERVVEIEILPDEDRNEMREAFTLHITNDQMMIADVQMNHAIIYIEQEGQASGVTFPSQPVVVSLLDYDDIPNARTNPPRGYPLICVSPCNPKYPDFATTGPICDSEGLNDTVTQFRWMVSAPTSESGVTSPLRQTDSDTFFSSTKSITLDSVYFGPGSRVQCVARAVGSEGDAGREHPSNSIVISTTDGMCMPRVANAIGAEPFTARMRYTGPADPDYPNKVRLTVTMPHVDGMLPVISTRQLSNFELALSKDGYRVGTHRCSNLLDYNEIPTDFGFITEETKNPNVVGDTYAYQYSPELRGEETLRFYRNLNLEACLWEFNAYYDMSELLDECGGLVGTDGQVLDLVQSYVSMRIPLFVSFVFHSPVATGGWKHFDQQSTLQLTFVYDTSILWQNGIGSQVTTGTQSLQGNLYPTSMRIDEDGRLVVNFRTEALFNGLFVQSHQSTDVVSTVNSIDHPGITYSLSLLRTEPTYAQPEQLWQFVSDLSVSDYSGTYTIQLVPCTTLPNTVYSQPPVCNPEDIITFELPIRFQQVSDPVPEEYSLNTEFVLVGKESIYLSDGSMGFGEGSDVAYNPGDTIFGRIHVDPVQNLGAGFNLDIQKVFLCTGRDGYIPKYNPAANEYGCVADTPNLLYAFKILDRGAPDTIVREFNGLPFNATLAIDNAADLELVQQPGADGFRLASDALFEVDYGRTWYLHSIYSMRSSESSGIGKRETEHHAISSRQRRQANSEALVDPAQGQGTNMKRVALQGPQDVDNNLGGTYELAPKGTNVVMIAVVIGVILIILLVALVIGVVVRRRQAKQQPVVVVNGSAKVVSNVHFDDNTEV.

The first 19 residues, 1–19 (MASALLCFLAAILPGMIAA), serve as a signal peptide directing secretion. Residues 20–3047 (QNTWVLGTSD…TYELAPKGTN (3028 aa)) lie on the Extracellular side of the membrane. CSPG repeat units follow at residues 289-388 (PPSL…LEIV), 411-499 (APVV…FRMT), 520-630 (APIV…FRVV), 656-762 (PPEM…FVVQ), 784-875 (QPPT…LEIT), 901-993 (LPPG…LTLS), 1022-1124 (APNV…FRCT), 1145-1238 (EEPQ…VLLT), 1259-1357 (TPRL…FDIT), 1378-1470 (VHPS…FQVT), 1490-1579 (KEPV…FIVT), and 1613-1710 (APQI…VEVR). Residues Asn330 and Asn453 are each glycosylated (N-linked (GlcNAc...) asparagine). N-linked (GlcNAc...) asparagine glycans are attached at residues Asn989, Asn1024, Asn1042, Asn1207, Asn1294, Asn1321, and Asn1327. N-linked (GlcNAc...) asparagine glycosylation is found at Asn1542, Asn1674, Asn1679, Asn1725, and Asn1739. Calx-beta domains lie at 1717–1816 (LPNQ…IILH), 1829–1942 (AVVT…VKLS), 1956–2062 (NVII…LVLN), and 2077–2179 (ITIN…LVLG). Residues Asn2080, Asn2195, Asn2274, Asn2385, and Asn2932 are each glycosylated (N-linked (GlcNAc...) asparagine). One can recognise a Calx-beta 5 domain in the interval 2197–2302 (TVVTVHDVGD…MREAFTLHIT (106 aa)). The interval 2983 to 3013 (SSGIGKRETEHHAISSRQRRQANSEALVDPA) is disordered. Residues 3048–3068 (VVMIAVVIGVILIILLVALVI) form a helical membrane-spanning segment. Residues 3069 to 3103 (GVVVRRRQAKQQPVVVVNGSAKVVSNVHFDDNTEV) are Cytoplasmic-facing.

It belongs to the FRAS1 family. In terms of tissue distribution, component of extracellular matrix fibers that interact with PMC filopodia during gastrulation (at protein level).

The protein resides in the cell membrane. In terms of biological role, extracellular matrix protein that may serve as substrate for the migratory primary mesenchyme cells (PMCs), the interaction possibly providing guidance information to migrating PMCs. The protein is Extracellular matrix protein 3 (ECM3) of Lytechinus variegatus (Green sea urchin).